The sequence spans 30 residues: Cyclotide psyleio E (30 aa).

A cross-link (cyclopeptide (Ser-Lys)) is located at residues 1–30 (SVTPIVCGETCFGGTCNTPGCSCSWPICTK). Cystine bridges form between Cys-7/Cys-21, Cys-11/Cys-23, and Cys-16/Cys-28.

Post-translationally, this is a cyclic peptide.

Functionally, probably participates in a plant defense mechanism. In Psychotria leiocarpa, this protein is Cyclotide psyleio E.